The sequence spans 165 residues: MALNLQDKQAIVAEVSEVAKGALSAVVADSRGVTVDKMTELRKAGREAGVYMRVVRNTLLRRVVEGTPFECLKDTFVGPTLIAYSMEHPGAAARLFKEFAKANAKFEVKAAAFEGELIPASQIDRLATLPTYEEAIARLMATMKEASAGKLVRTLAAVRDAKEAA.

The protein belongs to the universal ribosomal protein uL10 family. Part of the ribosomal stalk of the 50S ribosomal subunit. The N-terminus interacts with L11 and the large rRNA to form the base of the stalk. The C-terminus forms an elongated spine to which L12 dimers bind in a sequential fashion forming a multimeric L10(L12)X complex.

Forms part of the ribosomal stalk, playing a central role in the interaction of the ribosome with GTP-bound translation factors. In Citrobacter koseri (strain ATCC BAA-895 / CDC 4225-83 / SGSC4696), this protein is Large ribosomal subunit protein uL10.